The following is a 1481-amino-acid chain: Neuropathy target esterase sws (1481 aa).

Over 1–34 (MDVLELLRASANGCYNTIFSDAWSQYVSQQITSS) the chain is Lumenal. Residues 35–55 (LYLYIALGILTVLFVAWFIYF) traverse the membrane as a helical segment. At 56–1481 (KRLARLRLRD…KENKNVNTKN (1426 aa)) the chain is on the cytoplasmic side. A nucleoside 3',5'-cyclic phosphate is bound at residue 175 to 302 (IFGHFEKPVF…IRVIQVIMIR (128 aa)). Residues 336 to 420 (HLNSQSQSSQ…NNVQLPEVHG (85 aa)) form a disordered region. Composition is skewed to low complexity over residues 339-379 (SQSQ…LPLQ) and 401-412 (SGPNPNPNSGNN). Serine 448 carries the post-translational modification Phosphoserine. A nucleoside 3',5'-cyclic phosphate contacts are provided by residues 492 to 624 (ELGL…VVRR) and 613 to 740 (IVLD…LSHR). Residues 967–1133 (LVLGGGGARG…VNNLPGHLWR (167 aa)) form the PNPLA domain. Residues 971–976 (GGGARG) carry the GXGXXG motif. Positions 998–1002 (GVSIG) match the GXSXG motif. The Nucleophile role is filled by serine 1000. Residue aspartate 1120 is the Proton acceptor of the active site. Positions 1120–1122 (DGG) match the DGA/G motif. Phosphoserine is present on serine 1214. Positions 1366-1481 (LSLSEAEMDS…KENKNVNTKN (116 aa)) are disordered. Composition is skewed to basic and acidic residues over residues 1379–1390 (IDFRSDSKKDKA) and 1400–1410 (KDNEDKTDAVD). Residues 1445–1457 (TNTMTTQTTSPTT) show a composition bias toward low complexity.

This sequence belongs to the NTE family. As to quaternary structure, interacts with Pka-C3; interaction inhibits the catalytic function of Pka-C3 and the esterase activity of sws.

The protein resides in the endoplasmic reticulum membrane. The catalysed reaction is a 1-acyl-sn-glycero-3-phosphocholine + H2O = sn-glycerol 3-phosphocholine + a fatty acid + H(+). Its function is as follows. Phospholipase B that deacylates intracellular phosphatidylcholine (PtdCho), generating glycerophosphocholine (GroPtdCho). This deacylation occurs at both sn-2 and sn-1 positions of PtdCho. Its specific chemical modification by certain organophosphorus (OP) compounds leads to distal axonopathy. Plays a role in the signaling mechanism between neurons and glia that regulates glia wrapping during development of the adult brain. Essential for membrane lipid homeostasis and cell survival in both neurons and glia of the adult brain. This Drosophila willistoni (Fruit fly) protein is Neuropathy target esterase sws.